Consider the following 289-residue polypeptide: F-box protein PP2-A11 (289 aa).

In terms of domain architecture, F-box spans 23 to 69 (QPGLGDLPESCVALILQNLDPVEICRFSKLNTAFHGASWADFVWESK).

In terms of assembly, part of a SCF (ASK-cullin-F-box) protein ligase complex. Interacts with SKP1A/ASK1.

The protein localises to the nucleus. It functions in the pathway protein modification; protein ubiquitination. In terms of biological role, component of SCF(ASK-cullin-F-box) E3 ubiquitin ligase complexes, which may mediate the ubiquitination and subsequent proteasomal degradation of target proteins. The chain is F-box protein PP2-A11 (PP2A11) from Arabidopsis thaliana (Mouse-ear cress).